The sequence spans 593 residues: Cysteine/serine-rich nuclear protein 1 (593 aa).

Disordered stretches follow at residues 1 to 66 (MTGL…RDFC), 313 to 392 (FREL…GVDD), and 478 to 497 (REGSLPGTSVPPSMDAGQSS). Composition is skewed to low complexity over residues 17 to 46 (SSVSSSSSSSSSSSGCQSLSCSPSSSVSRA) and 351 to 372 (SCSSDMTDSSTASSSASGTSGA).

Belongs to the AXUD1 family.

The protein localises to the nucleus. In terms of biological role, binds to the consensus sequence 5'-AGAGTG-3' and has transcriptional activator activity. May have a tumor-suppressor function. May play a role in apoptosis. This Pongo abelii (Sumatran orangutan) protein is Cysteine/serine-rich nuclear protein 1 (CSRNP1).